The primary structure comprises 38 residues: Photosystem I reaction center subunit IX (38 aa).

A helical transmembrane segment spans residues 4–24; it reads FLTTAPVVAAIWFTLTAGILI.

It belongs to the PsaJ family.

It is found in the cellular thylakoid membrane. May help in the organization of the PsaE and PsaF subunits. The sequence is that of Photosystem I reaction center subunit IX from Parasynechococcus marenigrum (strain WH8102).